The following is a 136-amino-acid chain: Flagellar assembly factor FliW 2 (136 aa).

It belongs to the FliW family. In terms of assembly, interacts with translational regulator CsrA and flagellin(s).

The protein localises to the cytoplasm. Functionally, acts as an anti-CsrA protein, binds CsrA and prevents it from repressing translation of its target genes, one of which is flagellin. Binds to flagellin and participates in the assembly of the flagellum. The chain is Flagellar assembly factor FliW 2 from Wolinella succinogenes (strain ATCC 29543 / DSM 1740 / CCUG 13145 / JCM 31913 / LMG 7466 / NCTC 11488 / FDC 602W) (Vibrio succinogenes).